The following is a 63-amino-acid chain: 2-hydroxymuconate tautomerase (63 aa).

P2 serves as the catalytic Proton acceptor; via imino nitrogen.

Belongs to the 4-oxalocrotonate tautomerase family. Homohexamer.

It carries out the reaction (2Z,4E)-2-hydroxyhexa-2,4-dienedioate = (3E)-2-oxohex-3-enedioate. It functions in the pathway xenobiotic degradation; toluene degradation. Its function is as follows. Catalyzes the ketonization of 2-hydroxymuconate stereoselectively to yield 2-oxo-3-hexenedioate. The protein is 2-hydroxymuconate tautomerase (dmpI) of Pseudomonas sp. (strain CF600).